Reading from the N-terminus, the 193-residue chain is Peptidyl-tRNA hydrolase (193 aa).

Histidine 17 contributes to the tRNA binding site. Histidine 22 (proton acceptor) is an active-site residue. Positions 68, 70, and 116 each coordinate tRNA.

Belongs to the PTH family. As to quaternary structure, monomer.

The protein resides in the cytoplasm. It catalyses the reaction an N-acyl-L-alpha-aminoacyl-tRNA + H2O = an N-acyl-L-amino acid + a tRNA + H(+). Functionally, hydrolyzes ribosome-free peptidyl-tRNAs (with 1 or more amino acids incorporated), which drop off the ribosome during protein synthesis, or as a result of ribosome stalling. In terms of biological role, catalyzes the release of premature peptidyl moieties from peptidyl-tRNA molecules trapped in stalled 50S ribosomal subunits, and thus maintains levels of free tRNAs and 50S ribosomes. The sequence is that of Peptidyl-tRNA hydrolase from Xanthomonas axonopodis pv. citri (strain 306).